A 213-amino-acid polypeptide reads, in one-letter code: Imidazole glycerol phosphate synthase subunit HisH (213 aa).

The Glutamine amidotransferase type-1 domain maps to serine 4 to proline 213. Cysteine 83 serves as the catalytic Nucleophile. Catalysis depends on residues histidine 193 and glutamate 195.

In terms of assembly, heterodimer of HisH and HisF.

It localises to the cytoplasm. It catalyses the reaction 5-[(5-phospho-1-deoxy-D-ribulos-1-ylimino)methylamino]-1-(5-phospho-beta-D-ribosyl)imidazole-4-carboxamide + L-glutamine = D-erythro-1-(imidazol-4-yl)glycerol 3-phosphate + 5-amino-1-(5-phospho-beta-D-ribosyl)imidazole-4-carboxamide + L-glutamate + H(+). The catalysed reaction is L-glutamine + H2O = L-glutamate + NH4(+). Its pathway is amino-acid biosynthesis; L-histidine biosynthesis; L-histidine from 5-phospho-alpha-D-ribose 1-diphosphate: step 5/9. Its function is as follows. IGPS catalyzes the conversion of PRFAR and glutamine to IGP, AICAR and glutamate. The HisH subunit catalyzes the hydrolysis of glutamine to glutamate and ammonia as part of the synthesis of IGP and AICAR. The resulting ammonia molecule is channeled to the active site of HisF. This Burkholderia lata (strain ATCC 17760 / DSM 23089 / LMG 22485 / NCIMB 9086 / R18194 / 383) protein is Imidazole glycerol phosphate synthase subunit HisH.